The primary structure comprises 204 residues: Bombinin-like peptides 1 (204 aa).

Positions 1–16 form a signal peptide, or 18; the sequence is MNFKYIVAVSILIASA. Asparagine amide is present on residues Asn-70 and Asn-133.

It belongs to the bombinin family. In terms of tissue distribution, expressed by the skin glands.

The protein resides in the secreted. Functionally, has antimicrobial activity, but no hemolytic activity. Preference on killing Gram-negative non-enteric bacteria. The protein is Bombinin-like peptides 1 of Bombina orientalis (Oriental fire-bellied toad).